Consider the following 399-residue polypeptide: Acetate kinase (399 aa).

Asn10 serves as a coordination point for Mg(2+). Lys17 lines the ATP pocket. Arg91 lines the substrate pocket. The active-site Proton donor/acceptor is the Asp148. Residues His208–Gly212, Asp283–Arg285, and Gly331–Asn335 each bind ATP. Position 385 (Glu385) interacts with Mg(2+).

The protein belongs to the acetokinase family. In terms of assembly, homodimer. The cofactor is Mg(2+). Mn(2+) serves as cofactor.

It localises to the cytoplasm. The enzyme catalyses acetate + ATP = acetyl phosphate + ADP. It functions in the pathway metabolic intermediate biosynthesis; acetyl-CoA biosynthesis; acetyl-CoA from acetate: step 1/2. Its function is as follows. Catalyzes the formation of acetyl phosphate from acetate and ATP. Can also catalyze the reverse reaction. The sequence is that of Acetate kinase from Shewanella amazonensis (strain ATCC BAA-1098 / SB2B).